The primary structure comprises 207 residues: Dephospho-CoA kinase (207 aa).

The DPCK domain occupies 10–207; it reads TLGLTGGIGS…FYLTLRGGQS (198 aa). Residue 18–23 participates in ATP binding; the sequence is GSGKSA.

Belongs to the CoaE family.

The protein resides in the cytoplasm. The enzyme catalyses 3'-dephospho-CoA + ATP = ADP + CoA + H(+). Its pathway is cofactor biosynthesis; coenzyme A biosynthesis; CoA from (R)-pantothenate: step 5/5. In terms of biological role, catalyzes the phosphorylation of the 3'-hydroxyl group of dephosphocoenzyme A to form coenzyme A. In Pseudomonas fluorescens (strain ATCC BAA-477 / NRRL B-23932 / Pf-5), this protein is Dephospho-CoA kinase.